We begin with the raw amino-acid sequence, 832 residues long: Adhesin AWP2 (832 aa).

Residues 1–25 (MRKLPLFMAWKFWLICLYIIKVAST) form the signal peptide. N187, N290, N372, N390, N435, N448, N472, N482, N507, N512, N515, N534, N562, N579, N695, and N721 each carry an N-linked (GlcNAc...) asparagine glycan. Residues 722–747 (QTTSPSMHTTSLVGSENGVSAKTVND) form a disordered region.

It is found in the secreted. The protein localises to the cell wall. Functionally, mediates cell-substrate adhesion and promotes biofilm formation. This chain is Adhesin AWP2, found in Candida glabrata (strain ATCC 2001 / BCRC 20586 / JCM 3761 / NBRC 0622 / NRRL Y-65 / CBS 138) (Yeast).